Here is a 175-residue protein sequence, read N- to C-terminus: Glucagon family neuropeptides (175 aa).

Residues 1 to 23 form the signal peptide; that stretch reads MSGNVYKTLLTLLVYGLIMHCNV. Residues 24–80 constitute a propeptide that is removed on maturation; it reads YCSPDRWTPVPGAKLEEEVYDEDGNTLQDFALRAGAPGGGGPRPRWGRCTALYYPPG. An important for receptor binding region spans residues 149 to 157; it reads VKKYLAAVL. Leucine amide is present on leucine 157. Lysine 168 is subject to Lysine amide. The propeptide occupies 172-175; sequence VAYL.

Belongs to the glucagon family.

The protein localises to the secreted. In terms of biological role, primary role of GRF is to release GH from the pituitary. Functionally, PACAP is a neuropeptide involved in diverse array of physiological processes through activating the PACAP subfamily of class B1 G protein-coupled receptors: VIP receptor 1 (VIPR1), VIP receptor 2 (VIPR2), and PACAP type I receptor (ADCYAP1R1). Exerts neuroprotective and general cytoprotective effects due to anti-apoptotic, anti-inflammatory, and antioxidant actions. Promotes neuron projection development through the RAPGEF2/Rap1/B-Raf/ERK pathway. In chromaffin cells, induces long-lasting increase of intracellular calcium concentrations and neuroendocrine secretion. Involved in the control of glucose homeostasis, induces insulin secretion by pancreatic beta cells. PACAP exists in two bioactive forms from proteolysis of the same precursor protein, PACAP27 and PACAP38, which differ by eleven amino acid residues in the C-terminus. The chain is Glucagon family neuropeptides (ADCYAP1) from Gallus gallus (Chicken).